The chain runs to 140 residues: ATP synthase epsilon chain (140 aa).

It belongs to the ATPase epsilon chain family. F-type ATPases have 2 components, CF(1) - the catalytic core - and CF(0) - the membrane proton channel. CF(1) has five subunits: alpha(3), beta(3), gamma(1), delta(1), epsilon(1). CF(0) has three main subunits: a, b and c.

It localises to the cell inner membrane. Produces ATP from ADP in the presence of a proton gradient across the membrane. The protein is ATP synthase epsilon chain (atpC) of Vibrio alginolyticus.